Consider the following 209-residue polypeptide: Probable calcium-binding protein CML36 (209 aa).

The interval 22–59 (SKSPTAFSFGSASSSSGQDCKNSGGDGGGGSVTPTSIL) is disordered. A compositionally biased stretch (low complexity) spans 27–38 (AFSFGSASSSSG). EF-hand domains are found at residues 66-101 (YSYV…LGPD), 103-138 (LTEE…LDPA), 139-174 (RDST…IGDE), and 176-209 (CTLD…DLQR). 4 residues coordinate Ca(2+): Asp-79, Asp-81, Asp-83, and Asp-90. Residues Asp-152, Asp-154, Asp-156, Glu-163, Asp-189, Asp-191, Asp-193, and Glu-200 each contribute to the Ca(2+) site.

Functionally, potential calcium sensor. This chain is Probable calcium-binding protein CML36 (CML36), found in Arabidopsis thaliana (Mouse-ear cress).